A 234-amino-acid chain; its full sequence is Transcriptional regulatory protein CitB (234 aa).

One can recognise a Response regulatory domain in the interval 5–121; that stretch reads TTLIVEDEPM…RLQHTLERFA (117 aa). The residue at position 56 (Asp56) is a 4-aspartylphosphate. The H-T-H motif DNA-binding region spans 181–200; sequence ADSLARILGSSKTTARRYLE.

In terms of assembly, in vitro CitB and the CitA kinase domain form a complex, formation of which is enhanced by ATP. Post-translationally, phosphorylated by CitA.

It is found in the cytoplasm. Member of the two-component regulatory system CitA/CitB essential for expression of citrate-specific fermentation genes. Phosphorylated CitB binds to two sites in the citS-citC intergenic region where it probably activates transcription of both genes. The sequence is that of Transcriptional regulatory protein CitB (citB) from Klebsiella pneumoniae.